The sequence spans 435 residues: Proline and serine-rich protein 2 (435 aa).

Residues 1-10 (MPVTHRKSDA) are compositionally biased toward basic and acidic residues. The interval 1–22 (MPVTHRKSDASDMNSDTSPSCR) is disordered. Serine 8 bears the Phosphoserine mark. Over residues 11–20 (SDMNSDTSPS) the composition is skewed to polar residues. Serine 43 carries the post-translational modification Phosphoserine. At threonine 45 the chain carries Phosphothreonine. Composition is skewed to low complexity over residues 92-102 (PSLEESTSSPS) and 113-126 (PAPG…LPEG). 2 disordered regions span residues 92-276 (PSLE…RAAV) and 295-420 (AFPA…SEEA). The residue at position 146 (threonine 146) is a Phosphothreonine. Positions 146–169 (TPPPPDPPAPETLLAPPPLPSTPD) are enriched in pro residues. A Phosphoserine modification is found at serine 166. At threonine 167 the chain carries Phosphothreonine. A phosphoserine mark is found at serine 179, serine 212, and serine 215. The span at 228–237 (PAARGPRSGD) shows a compositional bias: low complexity. The residue at position 252 (arginine 252) is an Asymmetric dimethylarginine; alternate. Arginine 252 bears the Omega-N-methylarginine; alternate mark. The span at 302-311 (AGEGAPGGGS) shows a compositional bias: gly residues. Serine 312 carries the post-translational modification Phosphoserine. Arginine 320 carries the omega-N-methylarginine; alternate modification. Residue arginine 320 is modified to Dimethylated arginine; alternate. Arginine 378 is modified (omega-N-methylarginine). The residue at position 400 (serine 400) is a Phosphoserine. The residue at position 414 (arginine 414) is an Omega-N-methylarginine.

This chain is Proline and serine-rich protein 2 (PROSER2), found in Homo sapiens (Human).